Consider the following 288-residue polypeptide: Stomatin (288 aa).

Residues 1–22 (MAEKRHTRDSEAQRLPDSFKDS) form a disordered region. Residues 1-25 (MAEKRHTRDSEAQRLPDSFKDSPSK) are Cytoplasmic-facing. Residue S10 is modified to Phosphoserine; by PKA. S18 bears the Phosphoserine mark. Residues 26-54 (GLGPCGWILVAFSFLFTVITFPISIWMCI) lie within the membrane without spanning it. A lipid anchor (S-palmitoyl cysteine) is attached at C30. At 55–288 (KIIKEYERAI…IIGAKHSHLG (234 aa)) the chain is on the cytoplasmic side. The S-palmitoyl cysteine; partial moiety is linked to residue C87. Residues S161 and S244 each carry the phosphoserine modification. Positions 265 to 273 (STIVFPLPI) are required for homooligomerization. Positions 267–269 (IVF) are required for lipid raft association. The segment at 273 to 287 (IDMLQGIIGAKHSHL) is interaction with LANCL1.

This sequence belongs to the band 7/mec-2 family. In terms of assembly, homodimer and higher order homooligomer. The homodimer is banana-shaped. Interacts with ASIC1, ASIC2 and ASIC3. Interacts with LANCL1. Interacts with SLC2A1. Interacts with SLC4A1; this interaction positively regulates SLC4A1 activity. Identified in large complexes with SLC40A1, SLC14A1, SLC29A1 and AQP1. Interacts with STOML1; may redistribute STOM from the plasma membrane to late endosomes. Detected in erythrocytes (at protein level). Widely expressed.

The protein localises to the cell membrane. Its subcellular location is the cytoplasm. The protein resides in the cytoskeleton. It is found in the membrane raft. It localises to the melanosome. The protein localises to the cytoplasmic vesicle. In terms of biological role, regulates ion channel activity and transmembrane ion transport. Regulates ASIC2 and ASIC3 channel activity. This chain is Stomatin, found in Homo sapiens (Human).